The sequence spans 149 residues: Large ribosomal subunit protein bL9 (149 aa).

This sequence belongs to the bacterial ribosomal protein bL9 family.

Functionally, binds to the 23S rRNA. This Aliivibrio salmonicida (strain LFI1238) (Vibrio salmonicida (strain LFI1238)) protein is Large ribosomal subunit protein bL9.